The following is a 506-amino-acid chain: Maturase K (506 aa).

Belongs to the intron maturase 2 family. MatK subfamily.

Its subcellular location is the plastid. It is found in the chloroplast. In terms of biological role, usually encoded in the trnK tRNA gene intron. Probably assists in splicing its own and other chloroplast group II introns. In Prunus persica (Peach), this protein is Maturase K.